The chain runs to 711 residues: Ferric/cupric reductase transmembrane component 2 (711 aa).

The signal sequence occupies residues 1–23 (MHWTSILSAILLFCLSGARASPA). Over 24–164 (KTVIRNKVPL…GFYANLDVGN (141 aa)) the chain is Extracellular. N85, N108, N120, and N134 each carry an N-linked (GlcNAc...) asparagine glycan. The chain crosses the membrane as a helical span at residues 165–185 (IYGGIICAYFVAIMAFAGVLH). Residues 186–235 (CMNYTPFKTVLLKQKLVGYVRGYLTLPTIGSKHASDFSYFRIFTGYLPTR) lie on the Cytoplasmic side of the membrane. A helical transmembrane segment spans residues 236–256 (LEGIIILGYLVLHTVFLAYGY). Residues 257–280 (EYDPENIIFKSRRVQVARYVADRS) are Extracellular-facing. The Ferric oxidoreductase domain maps to 280-414 (SGVLAFAHFP…SGIEWIYTAI (135 aa)). A helical membrane pass occupies residues 281-301 (GVLAFAHFPLIVLFAGRNNFL). Residues 302 to 317 (EYISGVKYTSFIMFHK) lie on the Cytoplasmic side of the membrane. Positions 316 and 330 each coordinate heme. The helical transmembrane segment at 318-340 (WLGRMMFLDAMIHGSAYTSYTVA) threads the bilayer. Residue N341 is glycosylated (N-linked (GlcNAc...) asparagine). Over 341-353 (NKTWATSKNRLYW) the chain is Extracellular. Residues 354 to 374 (QFGVAALCLAGTMVFFSFAVF) traverse the membrane as a helical segment. At 375 to 377 (RKY) the chain is on the cytoplasmic side. Residues 378-398 (FYEAFLFLHIVLGAMFFYACW) form a helical membrane-spanning segment. Heme-binding residues include H386 and H400. The Extracellular portion of the chain corresponds to 399–400 (EH). A helical membrane pass occupies residues 401–423 (VVSLSGIEWIYTAIAIWIVDRII). Residues 415-534 (AIWIVDRIIR…EGPYGSSSPV (120 aa)) form the FAD-binding FR-type domain. Over 424–711 (RIIKASYFGF…IEYFEEYQCW (288 aa)) the chain is Cytoplasmic. Residue 479-485 (HPFTVLD) participates in FAD binding. Residues 526–529 (GPYG) and 677–678 (CG) each bind NADP(+).

This sequence belongs to the ferric reductase (FRE) family. FAD is required as a cofactor. It depends on heme as a cofactor.

The protein localises to the cell membrane. The catalysed reaction is 2 a Fe(II)-siderophore + NADP(+) + H(+) = 2 a Fe(III)-siderophore + NADPH. In terms of biological role, metalloreductase responsible for reducing extracellular iron and copper prior to import. Catalyzes the reductive uptake of Fe(3+)-salts and Fe(3+) bound to catecholate or hydroxamate siderophores. Fe(3+) is reduced to Fe(2+), which then dissociates from the siderophore and can be imported by the high-affinity Fe(2+) transport complex in the plasma membrane. Also participates in Cu(2+) reduction and Cu(+) uptake. This chain is Ferric/cupric reductase transmembrane component 2 (FRE2), found in Saccharomyces cerevisiae (strain ATCC 204508 / S288c) (Baker's yeast).